A 259-amino-acid chain; its full sequence is 5'-nucleotidase SurE (259 aa).

Residues D8, D9, S40, and N92 each contribute to the a divalent metal cation site.

This sequence belongs to the SurE nucleotidase family. A divalent metal cation is required as a cofactor.

It localises to the cytoplasm. The catalysed reaction is a ribonucleoside 5'-phosphate + H2O = a ribonucleoside + phosphate. Its function is as follows. Nucleotidase that shows phosphatase activity on nucleoside 5'-monophosphates. In Xanthomonas euvesicatoria pv. vesicatoria (strain 85-10) (Xanthomonas campestris pv. vesicatoria), this protein is 5'-nucleotidase SurE.